We begin with the raw amino-acid sequence, 417 residues long: Gamma-glutamyl phosphate reductase (417 aa).

This sequence belongs to the gamma-glutamyl phosphate reductase family.

Its subcellular location is the cytoplasm. The enzyme catalyses L-glutamate 5-semialdehyde + phosphate + NADP(+) = L-glutamyl 5-phosphate + NADPH + H(+). The protein operates within amino-acid biosynthesis; L-proline biosynthesis; L-glutamate 5-semialdehyde from L-glutamate: step 2/2. In terms of biological role, catalyzes the NADPH-dependent reduction of L-glutamate 5-phosphate into L-glutamate 5-semialdehyde and phosphate. The product spontaneously undergoes cyclization to form 1-pyrroline-5-carboxylate. The protein is Gamma-glutamyl phosphate reductase of Cronobacter sakazakii (strain ATCC BAA-894) (Enterobacter sakazakii).